Reading from the N-terminus, the 235-residue chain is Orotidine 5'-phosphate decarboxylase (235 aa).

Residues Asp11, Lys33, 60-69, Thr119, Arg180, Gln189, Gly209, and Arg210 contribute to the substrate site; that span reads DLKFHDIPNT. The active-site Proton donor is the Lys62.

The protein belongs to the OMP decarboxylase family. Type 1 subfamily. In terms of assembly, homodimer.

The enzyme catalyses orotidine 5'-phosphate + H(+) = UMP + CO2. Its pathway is pyrimidine metabolism; UMP biosynthesis via de novo pathway; UMP from orotate: step 2/2. In terms of biological role, catalyzes the decarboxylation of orotidine 5'-monophosphate (OMP) to uridine 5'-monophosphate (UMP). This is Orotidine 5'-phosphate decarboxylase from Alkalilimnicola ehrlichii (strain ATCC BAA-1101 / DSM 17681 / MLHE-1).